A 437-amino-acid polypeptide reads, in one-letter code: CCA-adding enzyme (437 aa).

ATP is bound by residues Ser-50 and Lys-53. CTP is bound by residues Ser-50 and Lys-53. Residues Asp-61, Asp-63, and Asp-112 each coordinate Mg(2+). 3 residues coordinate ATP: His-135, Lys-155, and Tyr-164. 3 residues coordinate CTP: His-135, Lys-155, and Tyr-164.

The protein belongs to the tRNA nucleotidyltransferase/poly(A) polymerase family. Archaeal CCA-adding enzyme subfamily. Homodimer. Mg(2+) is required as a cofactor.

It carries out the reaction a tRNA precursor + 2 CTP + ATP = a tRNA with a 3' CCA end + 3 diphosphate. The catalysed reaction is a tRNA with a 3' CCA end + 2 CTP + ATP = a tRNA with a 3' CCACCA end + 3 diphosphate. Its function is as follows. Catalyzes the addition and repair of the essential 3'-terminal CCA sequence in tRNAs without using a nucleic acid template. Adds these three nucleotides in the order of C, C, and A to the tRNA nucleotide-73, using CTP and ATP as substrates and producing inorganic pyrophosphate. tRNA 3'-terminal CCA addition is required both for tRNA processing and repair. Also involved in tRNA surveillance by mediating tandem CCA addition to generate a CCACCA at the 3' terminus of unstable tRNAs. While stable tRNAs receive only 3'-terminal CCA, unstable tRNAs are marked with CCACCA and rapidly degraded. The sequence is that of CCA-adding enzyme from Thermoplasma volcanium (strain ATCC 51530 / DSM 4299 / JCM 9571 / NBRC 15438 / GSS1).